The following is a 341-amino-acid chain: Phenylalanine--tRNA ligase alpha subunit (341 aa).

Glutamate 256 is a binding site for Mg(2+).

The protein belongs to the class-II aminoacyl-tRNA synthetase family. Phe-tRNA synthetase alpha subunit type 1 subfamily. Tetramer of two alpha and two beta subunits. Requires Mg(2+) as cofactor.

Its subcellular location is the cytoplasm. It catalyses the reaction tRNA(Phe) + L-phenylalanine + ATP = L-phenylalanyl-tRNA(Phe) + AMP + diphosphate + H(+). This is Phenylalanine--tRNA ligase alpha subunit from Clostridium perfringens (strain 13 / Type A).